The sequence spans 64 residues: Leader peptide SpeFL (64 aa).

The short motif at 32–38 is the Ornithine recognition loop element; the sequence is HIRRTRH. Arg35 is a binding site for L-ornithine.

This sequence belongs to the speF operon leader peptide family. In terms of assembly, binds ornithine in stalled 70S ribosomes, blocking the upper two-thirds of the exit tunnel. Contacts 23S rRNA and ribosomal proteins L4 and L22.

In terms of biological role, a small protein (arrest peptide) encoded upstream of inducible ornithine carboxylase gene (speF) that controls expression of downstream genes (usually speF and potE) by transcriptional and translational attenuation. This Haemophilus influenzae (strain ATCC 51907 / DSM 11121 / KW20 / Rd) protein is Leader peptide SpeFL.